Here is an 89-residue protein sequence, read N- to C-terminus: Large ribosomal subunit protein bL27 (89 aa).

The interval 1–21 is disordered; it reads MAHKKSGGSSSNGRDSESKRL.

This sequence belongs to the bacterial ribosomal protein bL27 family.

The polypeptide is Large ribosomal subunit protein bL27 (Caulobacter vibrioides (strain NA1000 / CB15N) (Caulobacter crescentus)).